A 347-amino-acid polypeptide reads, in one-letter code: Protein RecA (347 aa).

65–72 (GPESSGKT) is an ATP binding site. Positions 325 to 347 (KLGISDGDVEETEDAPKSLFDEE) are disordered. Basic and acidic residues predominate over residues 338–347 (DAPKSLFDEE).

Belongs to the RecA family.

Its subcellular location is the cytoplasm. Functionally, can catalyze the hydrolysis of ATP in the presence of single-stranded DNA, the ATP-dependent uptake of single-stranded DNA by duplex DNA, and the ATP-dependent hybridization of homologous single-stranded DNAs. It interacts with LexA causing its activation and leading to its autocatalytic cleavage. This chain is Protein RecA, found in Staphylococcus aureus (strain Mu3 / ATCC 700698).